Consider the following 192-residue polypeptide: dTDP-3-amino-3,6-dideoxy-alpha-D-galactopyranose 3-N-acetyltransferase (192 aa).

This sequence belongs to the transferase hexapeptide repeat family.

It carries out the reaction dTDP-3-amino-3,6-dideoxy-alpha-D-galactopyranose + acetyl-CoA = dTDP-3-acetamido-3,6-dideoxy-alpha-D-galactopyranose + CoA + H(+). Functionally, catalyzes the transfer of an acetyl group to dTDP-D-Fucp3N to form dTDP-D-Fucp3NAc in the biosynthesis of dTDP-3-acetamido-3,6-dideoxy-alpha-D-galactose, a glycan chain of the S-layer. The chain is dTDP-3-amino-3,6-dideoxy-alpha-D-galactopyranose 3-N-acetyltransferase (fdtC) from Aneurinibacillus thermoaerophilus.